The following is a 218-amino-acid chain: Ribose-5-phosphate isomerase A (218 aa).

Substrate is bound by residues Thr27–Thr30, Asp80–Asp83, and Lys93–Gly96. Residue Glu102 is the Proton acceptor of the active site. Lys120 is a substrate binding site.

This sequence belongs to the ribose 5-phosphate isomerase family. In terms of assembly, homodimer.

The catalysed reaction is aldehydo-D-ribose 5-phosphate = D-ribulose 5-phosphate. The protein operates within carbohydrate degradation; pentose phosphate pathway; D-ribose 5-phosphate from D-ribulose 5-phosphate (non-oxidative stage): step 1/1. Its function is as follows. Catalyzes the reversible conversion of ribose-5-phosphate to ribulose 5-phosphate. In Picrophilus torridus (strain ATCC 700027 / DSM 9790 / JCM 10055 / NBRC 100828 / KAW 2/3), this protein is Ribose-5-phosphate isomerase A.